A 257-amino-acid polypeptide reads, in one-letter code: Zinc import ATP-binding protein ZnuC (257 aa).

The region spanning 6 to 221 (IRLEQVGVSF…PAFVELFGQN (216 aa)) is the ABC transporter domain. 38–45 (GPNGAGKT) contacts ATP.

It belongs to the ABC transporter superfamily. Zinc importer (TC 3.A.1.15.5) family. In terms of assembly, the complex is composed of two ATP-binding proteins (ZnuC), two transmembrane proteins (ZnuB) and a solute-binding protein (ZnuA).

It localises to the cell inner membrane. It catalyses the reaction Zn(2+)(out) + ATP(in) + H2O(in) = Zn(2+)(in) + ADP(in) + phosphate(in) + H(+)(in). Its function is as follows. Part of the ABC transporter complex ZnuABC involved in zinc import. Responsible for energy coupling to the transport system. The polypeptide is Zinc import ATP-binding protein ZnuC (Pseudomonas entomophila (strain L48)).